The chain runs to 437 residues: Lipid II isoglutaminyl synthase (glutamine-hydrolyzing) subunit MurT (437 aa).

Cys202, Cys205, Cys224, and Cys226 together coordinate Zn(2+). Asp349 is a catalytic residue.

Belongs to the MurCDEF family. MurT subfamily. As to quaternary structure, forms a heterodimer with GatD.

The catalysed reaction is beta-D-GlcNAc-(1-&gt;4)-Mur2Ac(oyl-L-Ala-gamma-D-Glu-L-Lys-D-Ala-D-Ala)-di-trans,octa-cis-undecaprenyl diphosphate + L-glutamine + ATP + H2O = beta-D-GlcNAc-(1-&gt;4)-Mur2Ac(oyl-L-Ala-D-isoglutaminyl-L-Lys-D-Ala-D-Ala)-di-trans,octa-cis-undecaprenyl diphosphate + L-glutamate + ADP + phosphate + H(+). It catalyses the reaction beta-D-GlcNAc-(1-&gt;4)-Mur2Ac(oyl-L-Ala-gamma-D-Glu-L-Lys-D-Ala-D-Ala)-di-trans,octa-cis-undecaprenyl diphosphate + ATP = beta-D-GlcNAc-(1-&gt;4)-Mur2Ac(oyl-L-Ala-gamma-D-O-P-Glu-L-Lys-D-Ala-D-Ala)-di-trans,octa-cis-undecaprenyl diphosphate + ADP. The enzyme catalyses beta-D-GlcNAc-(1-&gt;4)-Mur2Ac(oyl-L-Ala-gamma-D-O-P-Glu-L-Lys-D-Ala-D-Ala)-di-trans,octa-cis-undecaprenyl diphosphate + NH4(+) = beta-D-GlcNAc-(1-&gt;4)-Mur2Ac(oyl-L-Ala-D-isoglutaminyl-L-Lys-D-Ala-D-Ala)-di-trans,octa-cis-undecaprenyl diphosphate + phosphate + H(+). It participates in cell wall biogenesis; peptidoglycan biosynthesis. Its function is as follows. The lipid II isoglutaminyl synthase complex catalyzes the formation of alpha-D-isoglutamine in the cell wall lipid II stem peptide. The MurT subunit catalyzes the ATP-dependent amidation of D-glutamate residue of lipid II, converting it to an isoglutamine residue. The polypeptide is Lipid II isoglutaminyl synthase (glutamine-hydrolyzing) subunit MurT (Staphylococcus aureus (strain COL)).